The primary structure comprises 375 residues: Paralyzed arrest at two-fold protein 6 (375 aa).

Residues 1 to 51 (MSTLGRSKTPSRDEPKKPGVFEKLSGTLSRKKKAPEDEHGNQGGAHHATDE) form a disordered region. The span at 10-20 (PSRDEPKKPGV) shows a compositional bias: basic and acidic residues. Calponin-homology (CH) domains are found at residues 99–206 (AQVV…LHYR) and 266–373 (AHVK…TKYK).

It belongs to the parvin family. May interact (via calponin-homology (CH) 2 domain) with pat-4 (via kinase domain). May form a complex with unc-112 and pat-4. Component of an integrin containing attachment complex, composed of at least pat-2, pat-3, pat-4, pat-6, unc-52, unc-97 and unc-112. As to expression, expressed from 1.5 stage embryos, mostly within the muscle cells. In adult hermaphrodites, expressed in the attachments of other muscles, including the uterine, anal depressor, anal sphincter, and vulval muscles, as well as in the spermatheca and the distal tip cells. Expressed in mechanosensory receptor neurons ALML/R, PLML/R, AVM, and PVM. Localizes at body wall muscle attachments.

It is found in the cytoplasm. Its subcellular location is the cytoskeleton. It localises to the myofibril. The protein resides in the sarcomere. The protein localises to the m line. It is found in the perikaryon. Its subcellular location is the cell projection. It localises to the axon. Functionally, involved in the regulation of cell adhesion and cytoskeleton organization. Component of an integrin containing attachment complex, which is required for muscle development and maintenance. During embryonic development, required to recruit cpna-1, unc-89 and myofilaments to newly forming integrin attachments composed of integrins pat-2/pat-3, pat-4 and unc-112. Also required to reposition the integrin-based attachments so that they form the highly ordered array of dense body and M-line attachments that are characteristic of mature muscle cells. During the formation of neuromuscular junctions at the larval stage, negatively regulates membrane protrusion from body wall muscles. This is Paralyzed arrest at two-fold protein 6 from Caenorhabditis elegans.